The chain runs to 149 residues: Putative mediator of RNA polymerase II transcription subunit 22 (149 aa).

The protein belongs to the Mediator complex subunit 22 family. Component of the Mediator complex.

Its subcellular location is the nucleus. Functionally, component of the Mediator complex, a coactivator involved in the regulated transcription of nearly all RNA polymerase II-dependent genes. Mediator functions as a bridge to convey information from gene-specific regulatory proteins to the basal RNA polymerase II transcription machinery. Mediator is recruited to promoters by direct interactions with regulatory proteins and serves as a scaffold for the assembly of a functional preinitiation complex with RNA polymerase II and the general transcription factors. The polypeptide is Putative mediator of RNA polymerase II transcription subunit 22 (med22) (Dictyostelium discoideum (Social amoeba)).